We begin with the raw amino-acid sequence, 154 residues long: RING finger protein 11 (154 aa).

The segment covering 1-12 (MGNCLKSPTSDD) has biased composition (polar residues). Positions 1 to 53 (MGNCLKSPTSDDISLLHESQSDRASFGEGTEPDQEPPPPYQEQVPVPVYHPTP) are disordered. A lipid anchor (N-myristoyl glycine) is attached at Gly-2. Cys-4 is lipidated: S-palmitoyl cysteine. Phosphoserine is present on residues Ser-14 and Ser-25. Residues 37–40 (PPPY) carry the PPxY motif motif. The segment covering 41 to 51 (QEQVPVPVYHP) has biased composition (low complexity). An RING-type zinc finger spans residues 99-140 (CVICMMDFVYGDPIRFLPCMHIYHLDCIDDWLMRSFTCPSCM). The residue at position 135 (Thr-135) is a Phosphothreonine; by PKB/AKT1.

As to quaternary structure, interacts (when phosphorylated) with 14-3-3. Interacts with the E3 ubiquitin-ligases NEDD4, ITCH, SMURF2 and WWP1. Also interacts with the E2 ubiquitin-conjugating enzymes UBE2D1 and UBE2N, but neither with CDC34, nor with UBE2L3. Interacts with ZNF350, EPS15 and STAMBP. After TNF stimulation, interacts with TAX1BP1, TNFAIP3 and RIPK1; these interactions are transient and they are lost after 1 hour of stimulation with TNF. Interacts with GGA1. Ubiquitinated in the presence of ITCH, SMURF2 and UBE2D1, as well as WWP1. Post-translationally, phosphorylation by PKB/AKT1 may accelerate degradation by the proteasome. In terms of processing, acylation at both Gly-2 and Cys-4 is required for proper localization to the endosomes.

It is found in the early endosome. It localises to the recycling endosome. The protein resides in the cytoplasm. The protein localises to the nucleus. Functionally, essential component of a ubiquitin-editing protein complex, comprising also TNFAIP3, ITCH and TAX1BP1, that ensures the transient nature of inflammatory signaling pathways. Promotes the association of TNFAIP3 to RIPK1 after TNF stimulation. TNFAIP3 deubiquitinates 'Lys-63' polyubiquitin chains on RIPK1 and catalyzes the formation of 'Lys-48'-polyubiquitin chains. This leads to RIPK1 proteasomal degradation and consequently termination of the TNF- or LPS-mediated activation of NF-kappa-B. Recruits STAMBP to the E3 ubiquitin-ligase SMURF2 for ubiquitination, leading to its degradation by the 26S proteasome. The protein is RING finger protein 11 (RNF11) of Bos taurus (Bovine).